The following is a 229-amino-acid chain: Interleukin-22 receptor subunit alpha-2 (229 aa).

An N-terminal signal peptide occupies residues 1–19 (MPKHCFLGLLIMLLTTATE). Fibronectin type-III domains lie at 28 to 127 (KPQK…TKLD) and 128 to 229 (PPVV…VQIP). Asn-54 carries N-linked (GlcNAc...) asparagine glycosylation. 2 cysteine pairs are disulfide-bonded: Cys-76–Cys-84 and Cys-204–Cys-225.

Belongs to the type II cytokine receptor family.

The protein resides in the secreted. In terms of biological role, receptor for IL22. Binds to IL22, prevents interaction with the functional IL-22R complex and blocks the activity of IL22 (in vitro). May play an important role as an IL22 antagonist in the regulation of inflammatory responses. The sequence is that of Interleukin-22 receptor subunit alpha-2 (Il22ra2) from Rattus norvegicus (Rat).